Consider the following 330-residue polypeptide: Glycerol-3-phosphate dehydrogenase [NAD(P)+] (330 aa).

NADPH-binding residues include tryptophan 11, arginine 33, and lysine 105. Sn-glycerol 3-phosphate-binding residues include lysine 105, glycine 133, and serine 135. Alanine 137 is a binding site for NADPH. Sn-glycerol 3-phosphate-binding residues include lysine 188, aspartate 241, serine 251, arginine 252, and asparagine 253. Residue lysine 188 is the Proton acceptor of the active site. Residue arginine 252 coordinates NADPH. The NADPH site is built by valine 276 and glutamate 278.

This sequence belongs to the NAD-dependent glycerol-3-phosphate dehydrogenase family.

It localises to the cytoplasm. The catalysed reaction is sn-glycerol 3-phosphate + NAD(+) = dihydroxyacetone phosphate + NADH + H(+). It carries out the reaction sn-glycerol 3-phosphate + NADP(+) = dihydroxyacetone phosphate + NADPH + H(+). The protein operates within membrane lipid metabolism; glycerophospholipid metabolism. Functionally, catalyzes the reduction of the glycolytic intermediate dihydroxyacetone phosphate (DHAP) to sn-glycerol 3-phosphate (G3P), the key precursor for phospholipid synthesis. This chain is Glycerol-3-phosphate dehydrogenase [NAD(P)+], found in Acidovorax sp. (strain JS42).